We begin with the raw amino-acid sequence, 257 residues long: NAD-capped RNA hydrolase NudC (257 aa).

A substrate-binding site is contributed by arginine 69. The Zn(2+) site is built by cysteine 98 and cysteine 101. Glutamate 111 lines the substrate pocket. Residues cysteine 116 and cysteine 119 each coordinate Zn(2+). Residue tyrosine 124 coordinates substrate. In terms of domain architecture, Nudix hydrolase spans 125 to 248 (PQIAPCIIVA…TVARRLIEDT (124 aa)). A divalent metal cation contacts are provided by alanine 158, glutamate 174, and glutamate 178. The Nudix box motif lies at 159–180 (GFVEVGETLEQAVAREVMEESG). A substrate-binding site is contributed by 192–199 (QPWPFPQS). Residue glutamate 219 coordinates a divalent metal cation. Alanine 241 is a substrate binding site.

This sequence belongs to the Nudix hydrolase family. NudC subfamily. Homodimer. It depends on Mg(2+) as a cofactor. Mn(2+) serves as cofactor. The cofactor is Zn(2+).

The catalysed reaction is a 5'-end NAD(+)-phospho-ribonucleoside in mRNA + H2O = a 5'-end phospho-adenosine-phospho-ribonucleoside in mRNA + beta-nicotinamide D-ribonucleotide + 2 H(+). It catalyses the reaction NAD(+) + H2O = beta-nicotinamide D-ribonucleotide + AMP + 2 H(+). The enzyme catalyses NADH + H2O = reduced beta-nicotinamide D-ribonucleotide + AMP + 2 H(+). MRNA decapping enzyme that specifically removes the nicotinamide adenine dinucleotide (NAD) cap from a subset of mRNAs by hydrolyzing the diphosphate linkage to produce nicotinamide mononucleotide (NMN) and 5' monophosphate mRNA. The NAD-cap is present at the 5'-end of some mRNAs and stabilizes RNA against 5'-processing. Has preference for mRNAs with a 5'-end purine. Catalyzes the hydrolysis of a broad range of dinucleotide pyrophosphates. This chain is NAD-capped RNA hydrolase NudC, found in Citrobacter koseri (strain ATCC BAA-895 / CDC 4225-83 / SGSC4696).